We begin with the raw amino-acid sequence, 178 residues long: DNA-directed RNA polymerase subunit beta (178 aa).

Belongs to the RNA polymerase beta chain family. As to quaternary structure, the RNAP catalytic core consists of 2 alpha, 1 beta, 1 beta' and 1 omega subunit. When a sigma factor is associated with the core the holoenzyme is formed, which can initiate transcription.

It catalyses the reaction RNA(n) + a ribonucleoside 5'-triphosphate = RNA(n+1) + diphosphate. Its function is as follows. DNA-dependent RNA polymerase catalyzes the transcription of DNA into RNA using the four ribonucleoside triphosphates as substrates. This Liberibacter asiaticus (Citrus greening disease) protein is DNA-directed RNA polymerase subunit beta (rpoB).